Here is a 437-residue protein sequence, read N- to C-terminus: Transcription factor E2F2 (437 aa).

The tract at residues 65 to 105 (ATPHGPEGQVVRCLPAGRLPAKRKLDLEGIGRPVVPEFPTP) is cyclin A/CDK2 binding. Residues 107-196 (GKCIRVDGLP…KNNIQWVGRG (90 aa)) mediate DNA binding. Positions 155–176 (LNWAAEVLDVQKRRIYDITNVL) are leucine-zipper. The DEF box signature appears at 160-196 (EVLDVQKRRIYDITNVLEGIQLIRKKAKNNIQWVGRG). Residues 197 to 289 (MFEDPTRPGK…PDRTEDNLQI (93 aa)) are dimerization. The interval 307–368 (VQEPDSPSEE…APPPPSLVPL (62 aa)) is disordered. Over residues 315-330 (EEPLPSTSTLCPSPDS) the composition is skewed to low complexity. Residues 351-365 (APAPTPQQAPPPPSL) show a composition bias toward pro residues. A transactivation region spans residues 359–437 (APPPPSLVPL…SYDLGDLLIN (79 aa)). Residues 410-427 (DDYLWGLEAGEGISDLFD) form a retinoblastoma protein binding region.

Belongs to the E2F/DP family. As to quaternary structure, component of the DRTF1/E2F transcription factor complex. Forms heterodimers with DP family members. The E2F2 complex binds specifically hypophosphorylated retinoblastoma protein RB1. During the cell cycle, RB1 becomes phosphorylated in mid-to-late G1 phase, detaches from the DRTF1/E2F complex, rendering E2F transcriptionally active. Viral oncoproteins, notably E1A, T-antigen and HPV E7, are capable of sequestering RB1, thus releasing the active complex. Binds EAPP. Post-translationally, phosphorylated by CDK2 and cyclin A-CDK2 in the S-phase. Highest level of expression is found in placenta, low levels are found in lung. Found as well in many immortalized cell lines derived from tumor samples.

The protein resides in the nucleus. Its function is as follows. Transcription activator that binds DNA cooperatively with DP proteins through the E2 recognition site, 5'-TTTC[CG]CGC-3' found in the promoter region of a number of genes whose products are involved in cell cycle regulation or in DNA replication. The DRTF1/E2F complex functions in the control of cell-cycle progression from g1 to s phase. E2F2 binds specifically to RB1 in a cell-cycle dependent manner. This chain is Transcription factor E2F2 (E2F2), found in Homo sapiens (Human).